A 430-amino-acid chain; its full sequence is Proteinase-activated receptor 1 (430 aa).

The signal sequence occupies residues 1–21 (MGPRRLLIVALGLSLCGPLLS). A propeptide spans 22-41 (SRVPMSQPESERTDATVNPR) (removed for receptor activation). The Extracellular portion of the chain corresponds to 42–107 (SFFLRNPSEN…SGYLTSPWLT (66 aa)). N-linked (GlcNAc...) asparagine glycans are attached at residues Asn67 and Asn80. The chain crosses the membrane as a helical span at residues 108 to 133 (LFMPSVYTIVFIVSLPLNVLAIAVFV). The Cytoplasmic portion of the chain corresponds to 134-142 (LRMKVKKPA). A helical transmembrane segment spans residues 143–162 (VVYMLHLAMADVLFVSVLPF). Topologically, residues 163 to 181 (KISYYFSGTDWQFGSGMCR) are extracellular. A disulfide bridge connects residues Cys180 and Cys259. The chain crosses the membrane as a helical span at residues 182-203 (FATAAFYGNMYASIMLMTVISI). The Cytoplasmic portion of the chain corresponds to 204–223 (DRFLAVVYPIQSLSWRTLGR). The chain crosses the membrane as a helical span at residues 224–244 (ANFTCVVIWVMAIMGVVPLLL). Residues 245–273 (KEQTTRVPGLNITTCHDVLSENLMQGFYS) are Extracellular-facing. The N-linked (GlcNAc...) asparagine glycan is linked to Asn255. The chain crosses the membrane as a helical span at residues 274 to 293 (YYFSAFSAIFFLVPLIVSTV). At 294–316 (CYTSIIRCLSSSAVANRSKKSRA) the chain is on the cytoplasmic side. Residues 317 to 339 (LFLSAAVFCIFIVCFGPTNVLLI) form a helical membrane-spanning segment. At 340 to 354 (VHYLFLSDSPGTEAA) the chain is on the extracellular side. The helical transmembrane segment at 355 to 379 (YFAYLLCVCVSSVSCCIDPLIYYYA) threads the bilayer. Residues 380-430 (SSECQRHLYSILCCKESSDPNSCNSTGQLMPSKMDTCSSHLNNSIYKKLLA) lie on the Cytoplasmic side of the membrane. Position 423 is a phosphoserine (Ser423).

It belongs to the G-protein coupled receptor 1 family. Proteolytic cleavage by thrombin generates a new N-terminus that functions as a tethered ligand. Also proteolytically cleaved by cathepsin CTSG. In terms of processing, phosphorylated in the C-terminal tail; probably mediating desensitization prior to the uncoupling and internalization of the receptor.

The protein localises to the cell membrane. High affinity receptor that binds the activated thrombin, leading to calcium release from intracellular stores. The thrombin-activated receptor signaling pathway is mediated through PTX-insensitive G proteins, activation of phospholipase C resulting in the production of 1D-myo-inositol 1,4,5-trisphosphate (InsP3) which binds to InsP3 receptors causing calcium release from the stores. In astrocytes, the calcium released into the cytosol allows the Ca(2+)-dependent release of L-glutamate into the synaptic cleft through BEST1, that targets the neuronal postsynaptic GRIN2A/NMDAR receptor resulting in the synaptic plasticity regulation. May play a role in platelets activation and in vascular development. Mediates up-regulation of pro-inflammatory cytokines, such as MCP-1/CCL2 and IL6, triggered by coagulation factor Xa (F10) in cardiac fibroblasts and umbilical vein endothelial cells. The chain is Proteinase-activated receptor 1 from Mus musculus (Mouse).